The primary structure comprises 425 residues: UDP-N-acetylglucosamine 1-carboxyvinyltransferase (425 aa).

Phosphoenolpyruvate is bound at residue 23–24 (KN). R100 serves as a coordination point for UDP-N-acetyl-alpha-D-glucosamine. The Proton donor role is filled by C124. C124 carries the 2-(S-cysteinyl)pyruvic acid O-phosphothioketal modification. UDP-N-acetyl-alpha-D-glucosamine-binding residues include D313 and I335.

The protein belongs to the EPSP synthase family. MurA subfamily.

It localises to the cytoplasm. The enzyme catalyses phosphoenolpyruvate + UDP-N-acetyl-alpha-D-glucosamine = UDP-N-acetyl-3-O-(1-carboxyvinyl)-alpha-D-glucosamine + phosphate. It functions in the pathway cell wall biogenesis; peptidoglycan biosynthesis. Its function is as follows. Cell wall formation. Adds enolpyruvyl to UDP-N-acetylglucosamine. This is UDP-N-acetylglucosamine 1-carboxyvinyltransferase from Wolbachia pipientis wMel.